Reading from the N-terminus, the 248-residue chain is 2,3-bisphosphoglycerate-dependent phosphoglycerate mutase (248 aa).

Substrate-binding positions include 8–15, 21–22, Arg60, 87–90, Lys98, 114–115, and 183–184; these read RHGESQWN, TG, ERHY, RR, and GN. The active-site Tele-phosphohistidine intermediate is the His9. Residue Glu87 is the Proton donor/acceptor of the active site.

Belongs to the phosphoglycerate mutase family. BPG-dependent PGAM subfamily. Homodimer.

It catalyses the reaction (2R)-2-phosphoglycerate = (2R)-3-phosphoglycerate. It participates in carbohydrate degradation; glycolysis; pyruvate from D-glyceraldehyde 3-phosphate: step 3/5. Catalyzes the interconversion of 2-phosphoglycerate and 3-phosphoglycerate. In Teredinibacter turnerae (strain ATCC 39867 / T7901), this protein is 2,3-bisphosphoglycerate-dependent phosphoglycerate mutase.